The sequence spans 202 residues: Probable nicotinate-nucleotide adenylyltransferase (202 aa).

It belongs to the NadD family.

The enzyme catalyses nicotinate beta-D-ribonucleotide + ATP + H(+) = deamido-NAD(+) + diphosphate. Its pathway is cofactor biosynthesis; NAD(+) biosynthesis; deamido-NAD(+) from nicotinate D-ribonucleotide: step 1/1. Its function is as follows. Catalyzes the reversible adenylation of nicotinate mononucleotide (NaMN) to nicotinic acid adenine dinucleotide (NaAD). This Bacteroides thetaiotaomicron (strain ATCC 29148 / DSM 2079 / JCM 5827 / CCUG 10774 / NCTC 10582 / VPI-5482 / E50) protein is Probable nicotinate-nucleotide adenylyltransferase.